A 395-amino-acid chain; its full sequence is Vacuolar protease A (395 aa).

A signal peptide spans 1 to 18 (MKGSLLLAGATLLGCTSA). The propeptide at 19–72 (KLHSLKLKKVSLKEQLEHADIDVQIKSLGQKYMGIRPGQHEQQMFKEQTPIEAE) is activation peptide. Residues 87–392 (YFSEISIGTP…DLGKGTVGLA (306 aa)) form the Peptidase A1 domain. Aspartate 105 is an active-site residue. Cysteine 118 and cysteine 123 are disulfide-bonded. N-linked (GlcNAc...) asparagine glycosylation occurs at asparagine 140. Aspartate 289 is an active-site residue. Cysteine 318 and cysteine 351 are disulfide-bonded. Asparagine 335 carries an N-linked (GlcNAc...) asparagine glycan.

This sequence belongs to the peptidase A1 family.

It is found in the vacuole lumen. The protein localises to the secreted. The enzyme catalyses Hydrolysis of proteins with broad specificity for peptide bonds. Cleaves -Leu-Leu-|-Val-Tyr- bond in a synthetic substrate. Does not act on esters of Tyr or Arg.. Its function is as follows. Vacuolar aspartic endopeptidase which is probably also secreted and contributes to virulence. In Arthroderma otae (strain ATCC MYA-4605 / CBS 113480) (Microsporum canis), this protein is Vacuolar protease A (PEP2).